The sequence spans 80 residues: Putative membrane protein insertion efficiency factor (80 aa).

The protein belongs to the UPF0161 family.

Its subcellular location is the cell membrane. Functionally, could be involved in insertion of integral membrane proteins into the membrane. This is Putative membrane protein insertion efficiency factor from Corynebacterium jeikeium (strain K411).